A 359-amino-acid chain; its full sequence is Hereditary hemochromatosis protein homolog (359 aa).

Positions 1–24 (MSLSAGLPVRPLLLLLLLLWSVAP) are cleaved as a signal peptide. The interval 25-126 (QALPPRSHSL…KVTKLGVVSE (102 aa)) is alpha-1. The Extracellular portion of the chain corresponds to 25–318 (QALPPRSHSL…WEPLQSQAMI (294 aa)). 4 N-linked (GlcNAc...) asparagine glycosylation sites follow: N114, N142, N166, and N246. The alpha-2 stretch occupies residues 127 to 217 (SHILQVVLGC…ELGRGVLGQQ (91 aa)). Intrachain disulfides connect C136/C199 and C237/C294. The alpha-3 stretch occupies residues 218–309 (VPTLVKVTRH…GLDQPLTASW (92 aa)). Residues 219–308 (PTLVKVTRHW…PGLDQPLTAS (90 aa)) enclose the Ig-like C1-type domain. The tract at residues 310–318 (EPLQSQAMI) is connecting peptide. A helical transmembrane segment spans residues 319-339 (IGIISGVTVCAIFLVGILFLI). Residues 340–359 (LRKRKASGGTMGGYVLTDCE) are Cytoplasmic-facing.

This sequence belongs to the MHC class I family. As to quaternary structure, binds TFR through the extracellular domain in a pH-dependent manner.

The protein resides in the cell membrane. Functionally, binds to transferrin receptor (TFR) and reduces its affinity for iron-loaded transferrin. This is Hereditary hemochromatosis protein homolog (Hfe) from Mus musculus (Mouse).